The following is a 350-amino-acid chain: Lipoyl synthase, mitochondrial (350 aa).

[4Fe-4S] cluster-binding residues include Cys-83, Cys-88, Cys-94, Cys-113, Cys-117, Cys-120, and Ser-328. In terms of domain architecture, Radical SAM core spans 96 to 317 (GGESGTATAT…EKVGNELGFA (222 aa)).

The protein belongs to the radical SAM superfamily. Lipoyl synthase family. [4Fe-4S] cluster is required as a cofactor.

The protein localises to the mitochondrion. The enzyme catalyses [[Fe-S] cluster scaffold protein carrying a second [4Fe-4S](2+) cluster] + N(6)-octanoyl-L-lysyl-[protein] + 2 oxidized [2Fe-2S]-[ferredoxin] + 2 S-adenosyl-L-methionine + 4 H(+) = [[Fe-S] cluster scaffold protein] + N(6)-[(R)-dihydrolipoyl]-L-lysyl-[protein] + 4 Fe(3+) + 2 hydrogen sulfide + 2 5'-deoxyadenosine + 2 L-methionine + 2 reduced [2Fe-2S]-[ferredoxin]. It functions in the pathway protein modification; protein lipoylation via endogenous pathway; protein N(6)-(lipoyl)lysine from octanoyl-[acyl-carrier-protein]: step 2/2. Functionally, catalyzes the radical-mediated insertion of two sulfur atoms into the C-6 and C-8 positions of the octanoyl moiety bound to the lipoyl domains of lipoate-dependent enzymes, thereby converting the octanoylated domains into lipoylated derivatives. The chain is Lipoyl synthase, mitochondrial from Trichoplax adhaerens (Trichoplax reptans).